A 175-amino-acid chain; its full sequence is MSAGALNSAGAVMHSTRLRTNEVAVALPEEGDASLFFVGKIRTPWKSRSDTPRQGSELGPLCTLEISEPWAVALKGVEAYSRLEILYWLHESPRDIVLLSPADDGEIHGAFSLRAPVRPNPIGTSIVKVERVSGNSIVVRGLDCLDGTPLLDIKPDRSLSKPLAPVRKSFSIPAA.

A TsaA-like domain is found at 35–165 (LFFVGKIRTP…DRSLSKPLAP (131 aa)). S-adenosyl-L-methionine contacts are provided by residues 52–54 (PRQ), 90–91 (HE), arginine 114, threonine 124, and 145–148 (LDGT).

This sequence belongs to the tRNA methyltransferase O family.

The chain is Probable S-adenosyl-L-methionine-binding protein VirR (virR) from Rhizobium radiobacter (Agrobacterium tumefaciens).